A 400-amino-acid polypeptide reads, in one-letter code: Cartilage-associated protein (400 aa).

Positions 1 to 25 (MGPRSPTAALLVLLCVGCAPTPGRG) are cleaved as a signal peptide. 2 N-linked (GlcNAc...) asparagine glycosylation sites follow: asparagine 86 and asparagine 362.

This sequence belongs to the leprecan family. In terms of tissue distribution, found in articular chondrocytes. Expressed in a variety of tissues.

Its subcellular location is the secreted. The protein resides in the extracellular space. It localises to the extracellular matrix. Its function is as follows. Necessary for efficient 3-hydroxylation of fibrillar collagen prolyl residues. This chain is Cartilage-associated protein (Crtap), found in Mus musculus (Mouse).